A 142-amino-acid chain; its full sequence is Salivary protein 15b (142 aa).

Positions 1-20 are cleaved as a signal peptide; that stretch reads MKYLGLALISAVFLIGTCQA. Intrachain disulfides connect Cys-27–Cys-44, Cys-40–Cys-108, and Cys-91–Cys-117.

The protein belongs to the PBP/GOBP family. As to expression, female salivary gland.

It localises to the secreted. Functionally, inhibits contact coagulation pathway activation in the host by sequestering anionic polymers, such as dextran sulfate and heparin, and thus blocking interaction of protein components of the pathway with negatively charged surfaces. Inhibits dextran sulfate-mediated autoactivation of host coagulation factor XII (F12). Inhibits dextran sulfate-mediated activation of host factor XI (F11) by activated F12. Inhibits polyphosphate-induced plasma extravasation at the injection site in mouse model, probably via inhibition of bradykinin generation in host skin. This is Salivary protein 15b from Phlebotomus duboscqi (Sandfly).